A 146-amino-acid polypeptide reads, in one-letter code: MAHRYLREKCFALNLNWKCKLFLTPPKSFWGTTHAYNFCPIHFLQALPSLPLSRNVEVAYGMPLIFVDVNGPSDVEVVRSFDVSTYLPLMPFSARALDFMITKSAHFSAATYCGSFSTFPAHAVIVKTVAAANNLPGFIFIPYWVY.

This is an uncharacterized protein from Escherichia coli (strain K12).